A 319-amino-acid polypeptide reads, in one-letter code: Malate dehydrogenase (319 aa).

NAD(+) contacts are provided by residues 10–15 (GAGNIG) and aspartate 34. The substrate site is built by arginine 83 and arginine 89. NAD(+)-binding positions include asparagine 96 and 119–121 (ITN). The substrate site is built by asparagine 121 and arginine 152. Histidine 176 (proton acceptor) is an active-site residue.

Belongs to the LDH/MDH superfamily. MDH type 3 family.

It carries out the reaction (S)-malate + NAD(+) = oxaloacetate + NADH + H(+). Functionally, catalyzes the reversible oxidation of malate to oxaloacetate. This is Malate dehydrogenase from Francisella tularensis subsp. mediasiatica (strain FSC147).